A 182-amino-acid polypeptide reads, in one-letter code: CDP-diacylglycerol--glycerol-3-phosphate 3-phosphatidyltransferase (182 aa).

At Gln2 to Phe12 the chain is on the cytoplasmic side. The chain crosses the membrane as a helical span at residues Arg13–Leu37. Residues Ile38–Thr60 lie on the Periplasmic side of the membrane. The chain crosses the membrane as a helical span at residues Arg61 to Leu81. Residues Val82 to Tyr86 lie on the Cytoplasmic side of the membrane. A helical membrane pass occupies residues His87–Ala107. The Periplasmic portion of the chain corresponds to Leu108–Pro145. Residues Asn146 to Met168 form a helical membrane-spanning segment. Topologically, residues Leu169–Asp181 are cytoplasmic.

It belongs to the CDP-alcohol phosphatidyltransferase class-I family.

The protein resides in the cell inner membrane. The catalysed reaction is a CDP-1,2-diacyl-sn-glycerol + sn-glycerol 3-phosphate = a 1,2-diacyl-sn-glycero-3-phospho-(1'-sn-glycero-3'-phosphate) + CMP + H(+). It functions in the pathway phospholipid metabolism; phosphatidylglycerol biosynthesis; phosphatidylglycerol from CDP-diacylglycerol: step 1/2. Functionally, catalyzes the conversion of cytidine diphosphate diacylglycerol (CDP-DG) and glycerol 3-phosphate into phosphatidylglycerol. Essential for the synthesis of anionic phospholipids, thereby playing a role in balancing the ratio of zwitterionic and anionic phospholipids, which is thought to be important for normal membrane function. In Shigella boydii serotype 4 (strain Sb227), this protein is CDP-diacylglycerol--glycerol-3-phosphate 3-phosphatidyltransferase.